Here is a 391-residue protein sequence, read N- to C-terminus: Formate-dependent phosphoribosylglycinamide formyltransferase (391 aa).

N(1)-(5-phospho-beta-D-ribosyl)glycinamide contacts are provided by residues 18 to 19 (EL) and glutamate 78. Residues arginine 110, lysine 151, 156-161 (SSGKGQ), 191-194 (EEFI), and glutamate 199 each bind ATP. The 191-residue stretch at 115 to 305 (DLASKDLKIK…EFELHLRAFL (191 aa)) folds into the ATP-grasp domain. 2 residues coordinate Mg(2+): glutamate 264 and glutamate 276. N(1)-(5-phospho-beta-D-ribosyl)glycinamide contacts are provided by residues aspartate 283, lysine 353, and 360 to 361 (RR).

This sequence belongs to the PurK/PurT family. In terms of assembly, homodimer.

It carries out the reaction N(1)-(5-phospho-beta-D-ribosyl)glycinamide + formate + ATP = N(2)-formyl-N(1)-(5-phospho-beta-D-ribosyl)glycinamide + ADP + phosphate + H(+). It participates in purine metabolism; IMP biosynthesis via de novo pathway; N(2)-formyl-N(1)-(5-phospho-D-ribosyl)glycinamide from N(1)-(5-phospho-D-ribosyl)glycinamide (formate route): step 1/1. In terms of biological role, involved in the de novo purine biosynthesis. Catalyzes the transfer of formate to 5-phospho-ribosyl-glycinamide (GAR), producing 5-phospho-ribosyl-N-formylglycinamide (FGAR). Formate is provided by PurU via hydrolysis of 10-formyl-tetrahydrofolate. This is Formate-dependent phosphoribosylglycinamide formyltransferase from Prochlorococcus marinus (strain AS9601).